Reading from the N-terminus, the 817-residue chain is Verprolin (817 aa).

Residues 1–15 (MAGAPAPPPPPPPPA) show a composition bias toward pro residues. Residues 1–752 (MAGAPAPPPP…THTNQPDVDV (752 aa)) form a disordered region. The region spanning 30-47 (GRDALLGDIRKGMKLKKA) is the WH2 1 domain. A compositionally biased stretch (basic and acidic residues) spans 37-51 (DIRKGMKLKKAETND). Over residues 62 to 79 (VSSASGSSGTVSSKGPSM) the composition is skewed to low complexity. Positions 87 to 106 (MGAPQLGDILAGGIPKLKHI) constitute a WH2 2 domain. N-linked (GlcNAc...) asparagine glycosylation occurs at N109. The segment covering 119 to 180 (SAPPIPGAVP…VPSSPAPPLP (62 aa)) has biased composition (pro residues). N212 is a glycosylation site (N-linked (GlcNAc...) asparagine). A compositionally biased stretch (pro residues) spans 236-245 (PQAPPPPPTP). A compositionally biased stretch (polar residues) spans 254–265 (IKPTDNAVSPPS). A compositionally biased stretch (pro residues) spans 306 to 335 (SQPPLPSSAPPIPTSHAPPLPPTAPPPPSL). The segment covering 336–348 (PNVTSAPKKATSA) has biased composition (low complexity). Residue N337 is glycosylated (N-linked (GlcNAc...) asparagine). The segment covering 372–382 (PVPPTLAPPLP) has biased composition (pro residues). N383 carries an N-linked (GlcNAc...) asparagine glycan. Over residues 383–395 (NTTSVPPNKASSM) the composition is skewed to low complexity. Positions 396-407 (PAPPPPPPPPPG) are enriched in pro residues. The span at 408-422 (AFSTSSALSASSIPL) shows a compositional bias: low complexity. Over residues 423–432 (APLPPPPPPS) the composition is skewed to pro residues. A compositionally biased stretch (low complexity) spans 447–469 (LTTNKPSASSKQSKISSSSSSSA). Residues 502 to 516 (DKQEDVIGSSKDDNV) show a composition bias toward basic and acidic residues. Over residues 518–534 (PSPISPSINPPKQSSQN) the composition is skewed to low complexity. S519 bears the Phosphoserine mark. Over residues 557 to 579 (APPPHTDAMAPPLPPSAPPPPIT) the composition is skewed to pro residues. Over residues 588 to 597 (GDDHTNDKSE) the composition is skewed to basic and acidic residues. The segment covering 649 to 661 (PPSPPVAAAPPLP) has biased composition (pro residues). Polar residues predominate over residues 713-737 (MDTGTSNSPSKNLKQRLFSTGGSTL). Residue S762 is modified to Phosphoserine. Residues N784 and N796 are each glycosylated (N-linked (GlcNAc...) asparagine). The tract at residues 786–806 (SQMPKPRPFQNKTKLYPSGKG) is disordered.

The protein belongs to the verprolin family. N-glycosylated.

It localises to the cytoplasm. The protein resides in the cytoskeleton. In terms of biological role, involved in cytoskeletal organization and cellular growth. May exert its effects on the cytoskeleton directly, or indirectly via proline-binding proteins (e.g. profilin) or proteins possessing SH3 domains. In Saccharomyces cerevisiae (strain ATCC 204508 / S288c) (Baker's yeast), this protein is Verprolin (VRP1).